Reading from the N-terminus, the 373-residue chain is Probable ethanolamine permease EutH (373 aa).

Helical transmembrane passes span 5–25, 38–58, 61–81, 111–131, 143–163, 166–186, 197–217, 236–256, 307–327, and 331–351; these read EIII…KIIG, IMAM…APVL, ILSP…AMFA, ILGS…LGII, VLSG…VAGF, IMIF…MLGL, FTIF…AGAI, IEIV…VFVI, VAFA…TAGV, and MIFP…AVGI.

Belongs to the EutH family.

The protein localises to the cell membrane. The enzyme catalyses ethanolamine(in) = ethanolamine(out). Probably involved in the diffusion of protonated ethanolamine (EA) into the cell at low pH. At low pH most EA is protonated, and this permease becomes necessary. Contributes to bacterial survival and replication in acidic macrophage vacuoles, but not to bacterial uptake by macrophages. The polypeptide is Probable ethanolamine permease EutH (Listeria monocytogenes serotype 1/2a (strain 10403S)).